A 253-amino-acid polypeptide reads, in one-letter code: DNA polymerase sliding clamp (253 aa).

This sequence belongs to the PCNA family. Homotrimer. The subunits circularize to form a toroid; DNA passes through its center. Replication factor C (RFC) is required to load the toroid on the DNA.

Sliding clamp subunit that acts as a moving platform for DNA processing. Responsible for tethering the catalytic subunit of DNA polymerase and other proteins to DNA during high-speed replication. The sequence is that of DNA polymerase sliding clamp from Methanopyrus kandleri (strain AV19 / DSM 6324 / JCM 9639 / NBRC 100938).